Here is a 453-residue protein sequence, read N- to C-terminus: Wall-associated protein (453 aa).

An N-terminal signal peptide occupies residues 1–29 (MKMKRKLLSLVSVLTILLGAFWVTKIVKA). Residues 331–403 (GRASSRVKRQ…TASQTNVPTT (73 aa)) form a disordered region. Positions 342 to 403 (ETTTVTETTT…TASQTNVPTT (62 aa)) are enriched in low complexity. Residues 422–426 (LPSTG) carry the LPXTG sorting signal motif. Thr-425 is subject to Pentaglycyl murein peptidoglycan amidated threonine. Positions 426–453 (GEQAGLLLTTVGLVIVAVAGVYFYRTRR) are cleaved as a propeptide — removed by sortase.

The protein resides in the secreted. The protein localises to the cell wall. The polypeptide is Wall-associated protein (wapA) (Streptococcus mutans serotype c (strain ATCC 700610 / UA159)).